Reading from the N-terminus, the 367-residue chain is B2 bradykinin receptor (367 aa).

At 1 to 36 (MLNLTSQVPEPALNGTLPQSSSCFHSDWWNWLNTIQ) the chain is on the extracellular side. N-linked (GlcNAc...) asparagine glycans are attached at residues Asn-3 and Asn-14. A helical membrane pass occupies residues 37 to 60 (APFLWVLFLLAALENIFVLSVFCL). Over 61 to 69 (HKNSCTVAE) the chain is Cytoplasmic. A helical membrane pass occupies residues 70-94 (IYLGNLAMADLILALGLPFWAITIA). At 95–107 (NHFDWLFGEVLCR) the chain is on the extracellular side. Cys-106 and Cys-187 form a disulfide bridge. A helical transmembrane segment spans residues 108–129 (VVNTMIYMNLYSSICFLMLVSI). At 130–151 (DRYLALVKTMSMGRMRGVRWAK) the chain is on the cytoplasmic side. Residue Tyr-132 is modified to Phosphotyrosine. The chain crosses the membrane as a helical span at residues 152 to 174 (LYSLVIWGCTLLLSSPMLAFRTM). Topologically, residues 175–197 (HEYAAEGHNVTACIIKYPSRSWM) are extracellular. A glycan (N-linked (GlcNAc...) asparagine) is linked at Asn-183. A helical transmembrane segment spans residues 198–224 (VFTNILLNSVGFLLPLSIITYCTVQIL). The Cytoplasmic segment spans residues 225–243 (QVLRNNEMQKFKEIQTERK). A helical membrane pass occupies residues 244–268 (ATVLVLAVLLLFVVCWLPFQISTFL). Topologically, residues 269–287 (DTLLRLGVLSGCWDEHAVD) are extracellular. Residues 288 to 311 (VITQISSYVAYSNSGLNPLVYVIV) traverse the membrane as a helical segment. At 312 to 367 (GKRFRKKSREVYRVLCQKGGCMGEPVQMENSMGTLRTSISVERQIHKLQDWAGKKQ) the chain is on the cytoplasmic side. Position 323 is a phosphotyrosine (Tyr-323). The S-palmitoyl cysteine moiety is linked to residue Cys-327. Ser-342 carries the phosphoserine modification. At Thr-345 the chain carries Phosphothreonine. 2 positions are modified to phosphoserine; by GRK6: Ser-349 and Ser-351.

Belongs to the G-protein coupled receptor 1 family. Bradykinin receptor subfamily. BDKRB2 sub-subfamily. As to quaternary structure, forms a complex with PECAM1 and GNAQ. Interacts with PECAM1.

The protein localises to the cell membrane. Its function is as follows. Receptor for bradykinin. It is associated with G proteins that activate a phosphatidylinositol-calcium second messenger system. In Sus scrofa (Pig), this protein is B2 bradykinin receptor (BDKRB2).